We begin with the raw amino-acid sequence, 376 residues long: Chaperone protein DnaJ (376 aa).

Positions 5–70 (DFYEVLGVGR…DKKAAYDQFG (66 aa)) constitute a J domain. The segment at 132 to 210 (GLSKELRIPT…CHGEGRVEKS (79 aa)) adopts a CR-type zinc-finger fold. Residues Cys145, Cys148, Cys162, Cys165, Cys184, Cys187, Cys198, and Cys201 each contribute to the Zn(2+) site. CXXCXGXG motif repeat units follow at residues 145 to 152 (CEPCDGSG), 162 to 169 (CGTCHGQG), 184 to 191 (CPTCHGRG), and 198 to 205 (CNKCHGEG).

The protein belongs to the DnaJ family. Homodimer. The cofactor is Zn(2+).

It is found in the cytoplasm. Participates actively in the response to hyperosmotic and heat shock by preventing the aggregation of stress-denatured proteins and by disaggregating proteins, also in an autonomous, DnaK-independent fashion. Unfolded proteins bind initially to DnaJ; upon interaction with the DnaJ-bound protein, DnaK hydrolyzes its bound ATP, resulting in the formation of a stable complex. GrpE releases ADP from DnaK; ATP binding to DnaK triggers the release of the substrate protein, thus completing the reaction cycle. Several rounds of ATP-dependent interactions between DnaJ, DnaK and GrpE are required for fully efficient folding. Also involved, together with DnaK and GrpE, in the DNA replication of plasmids through activation of initiation proteins. This Shewanella piezotolerans (strain WP3 / JCM 13877) protein is Chaperone protein DnaJ.